Consider the following 723-residue polypeptide: Zinc finger protein 750 (723 aa).

The CCHC-type zinc-finger motif lies at 25-51 (YKCFQCPFTCNEKSHLFNHMKYGLCKN). 4 residues coordinate Zn(2+): C27, C30, H43, and C49. 5 disordered regions span residues 64–91 (KCPKSNSLDPKQTNQPDATAKPASSKSV), 132–153 (LHRASPCKSPAPEAALGAQPAL), 359–427 (ASSP…SQTC), 466–630 (PAQA…SEEQ), and 650–723 (RVGD…ARVS). Over residues 67–91 (KSNSLDPKQTNQPDATAKPASSKSV) the composition is skewed to polar residues. Residues 360 to 369 (SSPSRLNPSD) are compositionally biased toward polar residues. The segment covering 370-397 (PNRKHVEFESPIPEAKDSSKAGQRDTEG) has biased composition (basic and acidic residues). Residues 470–482 (AETTAESPVSLNV) are compositionally biased toward polar residues. The segment covering 500–509 (AAPSSPDDSS) has biased composition (low complexity). Residues 530–545 (PTYQGSPQAETASFSE) show a composition bias toward polar residues. Low complexity-rich tracts occupy residues 563–582 (APRPAFPGRPRAAEPAAAVP) and 606–616 (GDGAPPTGPGE). Residues 666 to 678 (DTPTLSSMESQEA) are compositionally biased toward polar residues.

In terms of tissue distribution, expressed in the skin, prostate, lung, placenta and thymus, and at low level in T-cells. Not expressed in peripheral blood leukocytes, pancreas and brain. Clearly expressed in primary keratinocytes but not in fibroblasts.

The protein resides in the nucleus. In terms of biological role, transcription factor involved in epidermis differentiation. Required for terminal epidermal differentiation: acts downstream of p63/TP63 and activates expression of late epidermal differentiation genes. Specifically binds to the promoter of KLF4 and promotes its expression. The polypeptide is Zinc finger protein 750 (ZNF750) (Homo sapiens (Human)).